The sequence spans 38 residues: Cytochrome b6-f complex subunit 5 (38 aa).

The helical transmembrane segment at 5-25 threads the bilayer; that stretch reads LVLGLVMGLVPITLAGLFVAA.

It belongs to the PetG family. As to quaternary structure, the 4 large subunits of the cytochrome b6-f complex are cytochrome b6, subunit IV (17 kDa polypeptide, PetD), cytochrome f and the Rieske protein, while the 4 small subunits are PetG, PetL, PetM and PetN. The complex functions as a dimer.

It localises to the cellular thylakoid membrane. Its function is as follows. Component of the cytochrome b6-f complex, which mediates electron transfer between photosystem II (PSII) and photosystem I (PSI), cyclic electron flow around PSI, and state transitions. PetG is required for either the stability or assembly of the cytochrome b6-f complex. This is Cytochrome b6-f complex subunit 5 from Gloeothece citriformis (strain PCC 7424) (Cyanothece sp. (strain PCC 7424)).